The sequence spans 862 residues: Protein PRQFV-amide (862 aa).

Positions 1–20 (MSSQLLICSVFVLFTFGPNS) are cleaved as a signal peptide. Positions 21 to 79 (FPSCLAQEQAGNSDATQLSADAKAPESAKDKSGDVQNDGTKSVRSKRDLEIDFGSGDVQ) are excised as a propeptide. A disordered region spans residues 32 to 68 (NSDATQLSADAKAPESAKDKSGDVQNDGTKSVRSKRD). Residues 43-53 (KAPESAKDKSG) are compositionally biased toward basic and acidic residues. Val-86 carries the post-translational modification Valine amide. A propeptide spanning residues 90–149 (AAPPVFQTPLVQDKISGFIPSETESPVIGEFAFPGSVFMDDEEALGAEEEPMDDEDLEFY) is cleaved from the precursor. A Valine amide modification is found at Val-156. A propeptide spanning residues 160–175 (GIDDYLLQEKLKDFIE) is cleaved from the precursor. 9 positions are modified to valine amide: Val-182, Val-190, Val-198, Val-206, Val-214, Val-222, Val-230, Val-238, and Val-246. Positions 250–259 (EADPSFLFED) are excised as a propeptide. Position 266 is a valine amide (Val-266). A propeptide spanning residues 270–300 (SLDFLGGANWYNPYDVTMEPQSEGSDLQGFS) is cleaved from the precursor. Val-307 is subject to Valine amide. A propeptide spanning residues 311–319 (DAFDMFEFS) is cleaved from the precursor. Val-326 bears the Valine amide mark. A propeptide spanning residues 330 to 338 (DQDEMFDFS) is cleaved from the precursor. Valine amide is present on Val-345. Residues 349–357 (DLQEFFDLS) constitute a propeptide that is removed on maturation. A Valine amide modification is found at Val-364. Residues 368 to 376 (EFDDEIDFS) constitute a propeptide that is removed on maturation. Residue Val-383 is modified to Valine amide. A propeptide spanning residues 387–395 (ENDDDFDLS) is cleaved from the precursor. Val-402 carries the valine amide modification. The propeptide occupies 406–414 (ENDDEFDLS). Val-421 is subject to Valine amide. The span at 424–434 (RENDDELEFSK) shows a compositional bias: basic and acidic residues. The segment at 424-528 (RENDDELEFS…NNDDLDFSKR (105 aa)) is disordered. A propeptide spanning residues 425 to 433 (ENDDELEFS) is cleaved from the precursor. At Val-440 the chain carries Valine amide. Residues 441–452 (GKREDDEIDFSK) are compositionally biased toward basic and acidic residues. Positions 444 to 451 (EDDEIDFS) are excised as a propeptide. A Valine amide modification is found at Val-458. Over residues 459-471 (GKRENDGEIDFSK) the composition is skewed to basic and acidic residues. Residues 462–470 (ENDGEIDFS) constitute a propeptide that is removed on maturation. Val-477 carries the valine amide modification. The segment covering 478-490 (GKRENDDEIDFSK) has biased composition (basic and acidic residues). The propeptide occupies 481–489 (ENDDEIDFS). Val-496 carries the valine amide modification. Residues 497 to 508 (GKREDGEIDFSK) show a composition bias toward basic and acidic residues. A propeptide spanning residues 500–507 (EDGEIDFS) is cleaved from the precursor. A Valine amide modification is found at Val-514. A compositionally biased stretch (basic and acidic residues) spans 515–527 (GKRENNDDLDFSK). Residues 518–526 (ENNDDLDFS) constitute a propeptide that is removed on maturation. Valine amide is present on Val-533. The propeptide occupies 537 to 545 (EVDDEIDFS). The disordered stretch occupies residues 549–634 (RQFVGKREND…RQFVGKREND (86 aa)). Val-552 is modified (valine amide). The segment covering 553-565 (GKRENDDDLDFSK) has biased composition (basic and acidic residues). Residues 556 to 564 (ENDDDLDFS) constitute a propeptide that is removed on maturation. Residue Val-571 is modified to Valine amide. Positions 572–584 (GKRENDDDLEFSK) are enriched in basic and acidic residues. The propeptide occupies 575-583 (ENDDDLEFS). At Val-590 the chain carries Valine amide. The propeptide occupies 594–602 (ENDPLLDFS). At Val-609 the chain carries Valine amide. Over residues 610-622 (GKRENDDDLDFSK) the composition is skewed to basic and acidic residues. The propeptide occupies 613 to 621 (ENDDDLDFS). Position 628 is a valine amide (Val-628). Positions 632–640 (ENDPLIDFS) are excised as a propeptide. Val-647 is subject to Valine amide. A propeptide spanning residues 651 to 659 (ESDGDFELS) is cleaved from the precursor. Position 666 is a valine amide (Val-666). Positions 670–677 (DVDGPGLS) are excised as a propeptide. At Val-684 the chain carries Valine amide. Residues 688-695 (EDYDIDFA) constitute a propeptide that is removed on maturation. The residue at position 702 (Val-702) is a Valine amide. The propeptide occupies 706-714 (GNEDEFEMS). At Val-721 the chain carries Valine amide. A propeptide spanning residues 724 to 757 (RNFEELDQDFLRHMHDILDKRIPQFVSLPSLTAA) is cleaved from the precursor. At Val-764 the chain carries Valine amide. Positions 768–812 (SDAAFLETLRHLRDYVGGQDEQNVSEFSYQHPYPSDLNDVGLIQQ) are excised as a propeptide. A Valine amide modification is found at Val-819. A propeptide spanning residues 823–862 (GGDVDDINTTYRLGDFVSQPMSFVEEPSWLCRQLNAFGIS) is cleaved from the precursor.

As to expression, expressed abundantly in the abdominal ganglion, much less in the pedal and cerebral ganglia, and rarely in the buccal and pleural ganglia.

It is found in the secreted. Its function is as follows. PRQFV-amide may act as a modulator within the feeding system as well as in other systems of Aplysia. This Aplysia californica (California sea hare) protein is Protein PRQFV-amide.